Here is a 289-residue protein sequence, read N- to C-terminus: Diaminopimelate epimerase (289 aa).

2 residues coordinate substrate: N11 and N78. Catalysis depends on C87, which acts as the Proton donor. Substrate contacts are provided by residues 88–89 (GN), N163, N199, and 217–218 (ER). C226 functions as the Proton acceptor in the catalytic mechanism. Position 227-228 (227-228 (GT)) interacts with substrate.

It belongs to the diaminopimelate epimerase family. In terms of assembly, homodimer.

The protein resides in the cytoplasm. The enzyme catalyses (2S,6S)-2,6-diaminopimelate = meso-2,6-diaminopimelate. Its pathway is amino-acid biosynthesis; L-lysine biosynthesis via DAP pathway; DL-2,6-diaminopimelate from LL-2,6-diaminopimelate: step 1/1. Functionally, catalyzes the stereoinversion of LL-2,6-diaminopimelate (L,L-DAP) to meso-diaminopimelate (meso-DAP), a precursor of L-lysine and an essential component of the bacterial peptidoglycan. The protein is Diaminopimelate epimerase of Mycolicibacterium gilvum (strain PYR-GCK) (Mycobacterium gilvum (strain PYR-GCK)).